The chain runs to 401 residues: Exodeoxyribonuclease 7 large subunit (401 aa).

It belongs to the XseA family. As to quaternary structure, heterooligomer composed of large and small subunits.

It localises to the cytoplasm. The catalysed reaction is Exonucleolytic cleavage in either 5'- to 3'- or 3'- to 5'-direction to yield nucleoside 5'-phosphates.. Functionally, bidirectionally degrades single-stranded DNA into large acid-insoluble oligonucleotides, which are then degraded further into small acid-soluble oligonucleotides. This chain is Exodeoxyribonuclease 7 large subunit, found in Clostridium botulinum (strain Langeland / NCTC 10281 / Type F).